Reading from the N-terminus, the 357-residue chain is MPKPPRSTQILSCNAPNGKPKTQHPSARAKVKRTPVNTRSIAEIKKALHPRNVHINGYDFNALIKAFPRLNAFVRPTSFGGLSIDFADPEAVKTLNTALLKHHYGIDFWDIPKGALCPPIPGRVDYLHYLADLLAEGDHHLVMDRVSVLDIGTGANGIYPILGCQVFGWHFVASDINSISLANVQGIIAQNPALHGRLNLRLQGDESAIFKGVIQPQERFELTLCNPPFHASLAEAAEGSLRKVRNLQLNRGRTAKPVAKLNFGGQGAELWCQGGEPQFLATMIDESQAFADQCLWFTSLVSKKENLKPCYQALAKLAVDTVKTIEMQQGNKMTRILAWSFQSAAKRKIWRNAHLSD.

Residues 1–15 show a composition bias toward polar residues; the sequence is MPKPPRSTQILSCNA. Residues 1–33 form a disordered region; the sequence is MPKPPRSTQILSCNAPNGKPKTQHPSARAKVKR.

This sequence belongs to the methyltransferase superfamily. METTL16/RlmF family.

Its subcellular location is the cytoplasm. The catalysed reaction is adenosine(1618) in 23S rRNA + S-adenosyl-L-methionine = N(6)-methyladenosine(1618) in 23S rRNA + S-adenosyl-L-homocysteine + H(+). Functionally, specifically methylates the adenine in position 1618 of 23S rRNA. This Shewanella putrefaciens (strain CN-32 / ATCC BAA-453) protein is Ribosomal RNA large subunit methyltransferase F.